The primary structure comprises 747 residues: Ferrichrome outer membrane transporter/phage receptor (747 aa).

An N-terminal signal peptide occupies residues 1–33 (MARSKTAQPKHSLRKIAVVVATAVSGMSVYAQA). Residues 34–192 (AVEPKEDTIT…NMVSKRPTTE (159 aa)) lie on the Periplasmic side of the membrane. The TonB box motif lies at 40–47 (DTITVTAA). One can recognise a TBDR plug domain in the interval 75 to 187 (PIQKVPQSIS…PGGLLNMVSK (113 aa)). Ferrichrome is bound by residues arginine 114, glutamine 133, and 148–149 (FY). The TBDR beta-barrel domain occupies 192-747 (EPLKEVQFKA…QVVATATFRF (556 aa)). The chain crosses the membrane as a beta stranded span at residues 193–201 (PLKEVQFKA). Over 202 to 206 (GTDSL) the chain is Extracellular. Residues 207 to 215 (FQTGFDFSD) form a beta stranded membrane-spanning segment. Over 216–222 (SLDDDGV) the chain is Periplasmic. Residues 223–231 (YSYRLTGLA) traverse the membrane as a beta stranded segment. The Extracellular portion of the chain corresponds to 232 to 245 (RSANAQQKGSEEQR). Residues 246–255 (YAIAPAFTWR) traverse the membrane as a beta stranded segment. At 256–259 (PDDK) the chain is on the periplasmic side. A beta stranded membrane pass occupies residues 260-268 (TNFTFLSYF). Residues 269 to 312 (QNEPETGYYGWLPKEGTVEPLPNGKRLPTDFNEGAKNNTYSRNE) are Extracellular-facing. 277–279 (YGW) contributes to the ferrichrome binding site. The beta stranded transmembrane segment at 313–321 (KMVGYSFDH) threads the bilayer. Residues 322–326 (EFNDT) are Periplasmic-facing. A beta stranded transmembrane segment spans residues 327 to 335 (FTVRQNLRF). Residues 336 to 387 (AENKTSQNSVYGYGVCSDPANAYSKQCAALAPADKGHYLARKYVVDDEKLQN) lie on the Extracellular side of the membrane. Residue 346–348 (YGY) coordinates ferrichrome. The cysteines at positions 351 and 362 are disulfide-linked. The beta stranded transmembrane segment at 388-396 (FSVDTQLQS) threads the bilayer. Residues 397-404 (KFATGDID) lie on the Periplasmic side of the membrane. The chain crosses the membrane as a beta stranded span at residues 405–413 (HTLLTGVDF). Residues 414–464 (MRMRNDINAWFGYDDSVPLLNLYNPVNTDFDFNAKDPANSGPYRILNKQKQ) are Extracellular-facing. Phenylalanine 424 contacts ferrichrome. The chain crosses the membrane as a beta stranded span at residues 465–473 (TGVYVQDQA). The Periplasmic portion of the chain corresponds to 474-477 (QWDK). The beta stranded transmembrane segment at 478–486 (VLVTLGGRY) threads the bilayer. The Extracellular segment spans residues 487–508 (DWADQESLNRVAGTTDKRDDKQ). The chain crosses the membrane as a beta stranded span at residues 509–517 (FTWRGGVNY). Over 518–522 (LFDNG) the chain is Periplasmic. The beta stranded transmembrane segment at 523-531 (VTPYFSYSE) threads the bilayer. The Extracellular portion of the chain corresponds to 532 to 551 (SFEPSSQVGKDGNIFAPSKG). The beta stranded transmembrane segment at 552 to 560 (KQYEVGVKY) threads the bilayer. Over 561-565 (VPEDR) the chain is Periplasmic. Residues 566 to 574 (PIVVTGAVY) form a beta stranded membrane-spanning segment. The Extracellular portion of the chain corresponds to 575-601 (NLTKTNNLMADPEGSFFSVEGGEIRAR). The beta stranded transmembrane segment at 602-610 (GVEIEAKAA) threads the bilayer. The Periplasmic portion of the chain corresponds to 611–613 (LSA). Residues 614 to 622 (SVNVVGSYT) form a beta stranded membrane-spanning segment. Residues 623–645 (YTDAEYTTDTTYKGNTPAQVPKH) lie on the Extracellular side of the membrane. A beta stranded membrane pass occupies residues 646 to 654 (MASLWADYT). Over 655 to 661 (FFDGPLS) the chain is Periplasmic. A beta stranded membrane pass occupies residues 662 to 670 (GLTLGTGGR). Topologically, residues 671–689 (YTGSSYGDPANSFKVGSYT) are extracellular. A beta stranded transmembrane segment spans residues 690–698 (VVDALVRYD). Over 699-705 (LARVGMA) the chain is Periplasmic. A beta stranded membrane pass occupies residues 706–714 (GSNVALHVN). At 715-737 (NLFDREYVASCFNTYGCFWGAER) the chain is on the extracellular side. A disulfide bridge connects residues cysteine 725 and cysteine 731. The TonB C-terminal box motif lies at 730-747 (GCFWGAERQVVATATFRF). Alanine 735 is a binding site for ferrichrome. Residues 738 to 746 (QVVATATFR) form a beta stranded membrane-spanning segment. Residue phenylalanine 747 is a topological domain, periplasmic.

It belongs to the TonB-dependent receptor family. Monomer. Interacts with TonB. Interacts with Escherichia phage T5 receptor-binding protein pb5 (RBP-pb5); this interaction is necessary for the entry of the viral genome into the host cell.

It is found in the cell outer membrane. Its activity is regulated as follows. Binding of ferrichrome or colicin M enhances the interaction between FhuA and TonB. TonB activates FhuA through interaction with the beta-barrel. In terms of biological role, involved in the uptake of iron in complex with ferrichrome, a hydroxamate-type siderophore. Binds and transports ferrichrome-iron across the outer membrane. In addition to its role in ferrichrome-iron transport, transports the antibiotic albomycin, which is a structural analog of ferrichrome, and acts as a receptor for colicin M, microcin J25 and bacteriophages T1, T5, phi80 and UC-1. The energy source, which is required for all FhuA functions except infection by phage T5, is provided by the inner membrane TonB system. The protein is Ferrichrome outer membrane transporter/phage receptor of Escherichia coli (strain K12).